A 300-amino-acid chain; its full sequence is N-acetylmuramic acid 6-phosphate etherase (300 aa).

Positions 57–220 constitute an SIS domain; that stretch reads ITHAFAHGGR…TSGAMIRSGK (164 aa). E85 serves as the catalytic Proton donor. E116 is an active-site residue.

It belongs to the GCKR-like family. MurNAc-6-P etherase subfamily. Homodimer.

The enzyme catalyses N-acetyl-D-muramate 6-phosphate + H2O = N-acetyl-D-glucosamine 6-phosphate + (R)-lactate. It functions in the pathway amino-sugar metabolism; 1,6-anhydro-N-acetylmuramate degradation. The protein operates within amino-sugar metabolism; N-acetylmuramate degradation. Its pathway is cell wall biogenesis; peptidoglycan recycling. In terms of biological role, specifically catalyzes the cleavage of the D-lactyl ether substituent of MurNAc 6-phosphate, producing GlcNAc 6-phosphate and D-lactate. Together with AnmK, is also required for the utilization of anhydro-N-acetylmuramic acid (anhMurNAc) either imported from the medium or derived from its own cell wall murein, and thus plays a role in cell wall recycling. The protein is N-acetylmuramic acid 6-phosphate etherase of Vibrio vulnificus (strain CMCP6).